An 889-amino-acid chain; its full sequence is Low-affinity potassium transport protein (889 aa).

The Cytoplasmic segment spans residues 1–51 (MPTAKRTSSRASLALPFQLRLVHKKSWGHRLRDFISGFLKSCRPIAKYVFP). Residues 52–73 (NFIVVHYIYLITLSIIGSILLY) traverse the membrane as a helical segment. Residues 74–80 (PCKNTAF) are Extracellular-facing. The helical transmembrane segment at 81-101 (IDVLFLAAGASTQGGLATKST) threads the bilayer. At 102–109 (NDFNLYQQ) the chain is on the cytoplasmic side. The chain crosses the membrane as a helical span at residues 110–130 (IVVYVITLLSTPILIHGFLAF). Over 131 to 464 (VRLYWFERYF…EYRALRLLCC (334 aa)) the chain is Extracellular. The tract at residues 189-244 (REDPRQSASDVPMDSPDTSALSSISPLNVSSSKEESSDTQSSPPNFSSKRQPSDVD) is disordered. The segment covering 207 to 219 (SALSSISPLNVSS) has biased composition (low complexity). N-linked (GlcNAc...) asparagine glycosylation is found at N216, N233, and N265. Residues 465-487 (ILMVYYIGFNILAFVTIVPWACT) traverse the membrane as a helical segment. Topologically, residues 488 to 499 (RHHYSEIIRRNG) are cytoplasmic. A helical membrane pass occupies residues 500-521 (VSPTWWGFFTAMSAFSNLGLSL). Residues 522 to 524 (TAD) lie on the Extracellular side of the membrane. Residues 525–545 (SMVSFDTAPYPLIFMMFFIII) traverse the membrane as a helical segment. The Cytoplasmic segment spans residues 546-548 (GNT). A helical membrane pass occupies residues 549-569 (GFPIMLRFIIWIMFKTSRDLS). Residues 570–584 (QFKESLGFLLDHPRR) are Extracellular-facing. A helical membrane pass occupies residues 585 to 605 (CFTLLFPSGPTWWLFTTLVVL). Topologically, residues 606–609 (NATD) are cytoplasmic. Residues 610-630 (WILFIILDFNSAVVRQVAKGY) form a helical membrane-spanning segment. Residues 631–657 (RALMGLFQSVCTRTAGFNVVDLSKLHP) are Extracellular-facing. A helical membrane pass occupies residues 658–678 (SIQVSYMLMMYVSVLPLAISI). The Cytoplasmic portion of the chain corresponds to 679 to 743 (RRTNVYEEQS…KSFVGAHLRR (65 aa)). A disordered region spans residues 705–733 (DDIKETDHDGESEERDTVSTKSKPKKQSP). The chain crosses the membrane as a helical span at residues 744–764 (QLSFDLWYLFLGLFIICICEG). Topologically, residues 765 to 776 (RKIEDVNKPDFN) are extracellular. Residues 777–797 (VFAILFEVVSAYGTVGLSLGY) traverse the membrane as a helical segment. Over 798 to 889 (PNTNTSLSAQ…KIATKFWGKH (92 aa)) the chain is Cytoplasmic.

Belongs to the TrkH potassium transport family.

It is found in the membrane. This protein is required for low-affinity potassium transport. In Saccharomyces cerevisiae (strain ATCC 204508 / S288c) (Baker's yeast), this protein is Low-affinity potassium transport protein (TRK2).